The primary structure comprises 223 residues: Putative 3-methyladenine DNA glycosylase (223 aa).

This sequence belongs to the DNA glycosylase MPG family.

The polypeptide is Putative 3-methyladenine DNA glycosylase (Pseudomonas syringae pv. syringae (strain B728a)).